We begin with the raw amino-acid sequence, 142 residues long: uncharacterized protein (142 aa).

Transmembrane regions (helical) follow at residues 3–23 (LIFI…FNLL), 30–50 (SVSW…AVWI), and 91–111 (FFLL…AYFS).

The protein resides in the membrane. This is an uncharacterized protein from Saccharomyces cerevisiae (strain ATCC 204508 / S288c) (Baker's yeast).